A 372-amino-acid polypeptide reads, in one-letter code: Queuine tRNA-ribosyltransferase (372 aa).

The active-site Proton acceptor is aspartate 90. Substrate contacts are provided by residues 90–94 (DSGGF), aspartate 144, glutamine 193, and glycine 220. The tract at residues 251 to 257 (GVGTPED) is RNA binding. Aspartate 270 (nucleophile) is an active-site residue. Positions 275–279 (TRNAR) are RNA binding; important for wobble base 34 recognition. 4 residues coordinate Zn(2+): cysteine 308, cysteine 310, cysteine 313, and histidine 339.

It belongs to the queuine tRNA-ribosyltransferase family. In terms of assembly, homodimer. Within each dimer, one monomer is responsible for RNA recognition and catalysis, while the other monomer binds to the replacement base PreQ1. Requires Zn(2+) as cofactor.

The enzyme catalyses 7-aminomethyl-7-carbaguanine + guanosine(34) in tRNA = 7-aminomethyl-7-carbaguanosine(34) in tRNA + guanine. The protein operates within tRNA modification; tRNA-queuosine biosynthesis. Its function is as follows. Catalyzes the base-exchange of a guanine (G) residue with the queuine precursor 7-aminomethyl-7-deazaguanine (PreQ1) at position 34 (anticodon wobble position) in tRNAs with GU(N) anticodons (tRNA-Asp, -Asn, -His and -Tyr). Catalysis occurs through a double-displacement mechanism. The nucleophile active site attacks the C1' of nucleotide 34 to detach the guanine base from the RNA, forming a covalent enzyme-RNA intermediate. The proton acceptor active site deprotonates the incoming PreQ1, allowing a nucleophilic attack on the C1' of the ribose to form the product. After dissociation, two additional enzymatic reactions on the tRNA convert PreQ1 to queuine (Q), resulting in the hypermodified nucleoside queuosine (7-(((4,5-cis-dihydroxy-2-cyclopenten-1-yl)amino)methyl)-7-deazaguanosine). The sequence is that of Queuine tRNA-ribosyltransferase from Sulfurimonas denitrificans (strain ATCC 33889 / DSM 1251) (Thiomicrospira denitrificans (strain ATCC 33889 / DSM 1251)).